Reading from the N-terminus, the 156-residue chain is uncharacterized protein (156 aa).

This is an uncharacterized protein from Escherichia coli (strain K12).